A 102-amino-acid polypeptide reads, in one-letter code: Small ribosomal subunit protein uS10 (102 aa).

It belongs to the universal ribosomal protein uS10 family. As to quaternary structure, part of the 30S ribosomal subunit.

Involved in the binding of tRNA to the ribosomes. The chain is Small ribosomal subunit protein uS10 from Latilactobacillus sakei subsp. sakei (strain 23K) (Lactobacillus sakei subsp. sakei).